Reading from the N-terminus, the 199-residue chain is Outer-membrane lipoprotein LolB (199 aa).

A signal peptide spans 1-28 (MSACPAPRSPFRWLHAFTLCLLLAVLAG). Cys29 carries N-palmitoyl cysteine lipidation. Cys29 carries S-diacylglycerol cysteine lipidation.

Belongs to the LolB family. As to quaternary structure, monomer.

The protein resides in the cell outer membrane. Functionally, plays a critical role in the incorporation of lipoproteins in the outer membrane after they are released by the LolA protein. The chain is Outer-membrane lipoprotein LolB from Bordetella bronchiseptica (strain ATCC BAA-588 / NCTC 13252 / RB50) (Alcaligenes bronchisepticus).